Reading from the N-terminus, the 266-residue chain is Undecaprenyl-diphosphatase (266 aa).

Transmembrane regions (helical) follow at residues 1 to 21, 39 to 59, 87 to 107, 114 to 134, 149 to 169, 183 to 203, 218 to 238, and 246 to 266; these read MDTFQVIILALIQGLTEFLPI, QGLSFDVAVNTGSLFAVVIYF, WWIILATLPAVFFGFLAKDFI, AEVIAVTTVVFGLLLWWADKM, ALLIGFAQALALIPGTSRSGA, AAARFSFLMSVPVSLGAAILV, ALILGTLISFVAAYACIHYFL, and MTPFVIYRLALGAVLCGFIFF.

This sequence belongs to the UppP family.

Its subcellular location is the cell inner membrane. The enzyme catalyses di-trans,octa-cis-undecaprenyl diphosphate + H2O = di-trans,octa-cis-undecaprenyl phosphate + phosphate + H(+). Functionally, catalyzes the dephosphorylation of undecaprenyl diphosphate (UPP). Confers resistance to bacitracin. The chain is Undecaprenyl-diphosphatase from Shewanella baltica (strain OS223).